A 335-amino-acid polypeptide reads, in one-letter code: Biotin synthase (335 aa).

Residues 46-274 (YKVQLASLFS…KSKIRLSAGR (229 aa)) enclose the Radical SAM core domain. The [4Fe-4S] cluster site is built by cysteine 61, cysteine 65, and cysteine 68. Residues cysteine 105, cysteine 137, cysteine 197, and arginine 269 each contribute to the [2Fe-2S] cluster site.

It belongs to the radical SAM superfamily. Biotin synthase family. In terms of assembly, homodimer. [4Fe-4S] cluster serves as cofactor. Requires [2Fe-2S] cluster as cofactor.

The catalysed reaction is (4R,5S)-dethiobiotin + (sulfur carrier)-SH + 2 reduced [2Fe-2S]-[ferredoxin] + 2 S-adenosyl-L-methionine = (sulfur carrier)-H + biotin + 2 5'-deoxyadenosine + 2 L-methionine + 2 oxidized [2Fe-2S]-[ferredoxin]. It participates in cofactor biosynthesis; biotin biosynthesis; biotin from 7,8-diaminononanoate: step 2/2. Catalyzes the conversion of dethiobiotin (DTB) to biotin by the insertion of a sulfur atom into dethiobiotin via a radical-based mechanism. The protein is Biotin synthase of Prochlorococcus marinus subsp. pastoris (strain CCMP1986 / NIES-2087 / MED4).